Reading from the N-terminus, the 426-residue chain is Probable imidazolonepropionase (426 aa).

Residues Tyr-158 and His-192 each contribute to the 4-imidazolone-5-propanoate site. An N-formimidoyl-L-glutamate-binding site is contributed by Tyr-158. His-260 lines the Fe(3+) pocket. Residue His-260 coordinates Zn(2+). Glu-263 serves as a coordination point for 4-imidazolone-5-propanoate. Asp-334 contributes to the Fe(3+) binding site. Residue Asp-334 participates in Zn(2+) binding. Asn-336 is a binding site for N-formimidoyl-L-glutamate.

The protein belongs to the metallo-dependent hydrolases superfamily. HutI family. Zn(2+) is required as a cofactor. It depends on Fe(3+) as a cofactor.

The catalysed reaction is 4-imidazolone-5-propanoate + H2O = N-formimidoyl-L-glutamate. It functions in the pathway amino-acid degradation; L-histidine degradation into L-glutamate; N-formimidoyl-L-glutamate from L-histidine: step 3/3. The protein is Probable imidazolonepropionase (amdhd1) of Dictyostelium discoideum (Social amoeba).